A 479-amino-acid chain; its full sequence is MVKETELIFIPVPSTGHILVHIEFAKRLINLDHRIHTITILNLSSPSSPHASVFARSLIASQPKIRLHDLPPIQDPPPFDLYQRAPEAYIVKLIKKNTPLIKDAVSSIVASRRGGSDSVQVAGLVLDLFCNSLVKDVGNELNLPSYIYLTCNARYLGMMKYIPDRHRKIASEFDLSSGDEELPVPGFINAIPTKFMPPGLFNKEAYEAYVELAPRFADAKGILVNSFTELEPHPFDYFSHLEKFPPVYPVGPILSLKDRASPNEEAVDRDQIVGWLDDQPESSVVFLCFGSRGSVDEPQVKEIARALELVGCRFLWSIRTSGDVETNPNDVLPEGFMGRVAGRGLVCGWAPQVEVLAHKAIGGFVSHCGWNSTLESLWFGVPVATWPMYAEQQLNAFTLVKELGLAVDLRMDYVSSRGGLVTCDEIARAVRSLMDGGDEKRKKVKEMADAARKALMDGGSSSLATARFIAELFEDGSSC.

Catalysis depends on His17, which acts as the Proton acceptor. An anthocyanidin is bound at residue His17. The active-site Charge relay is the Asp127. 8 residues coordinate UDP-alpha-D-glucose: Thr150, Ala350, Gln352, His367, Trp370, Asn371, Ser372, and Glu375. Ala390 contributes to the an anthocyanidin binding site. UDP-alpha-D-glucose-binding residues include Glu391 and Gln392.

The protein belongs to the UDP-glycosyltransferase family.

The enzyme catalyses a flavonol + UDP-alpha-D-glucose = a flavonol 3-O-beta-D-glucoside + UDP + H(+). It catalyses the reaction a 7-O-hydroxy-flavonol + UDP-alpha-D-glucose = a flavonol 7-O-beta-D-glucoside + UDP + H(+). Possesses quercetin 3-O-glucosyltransferase and 7-O-glucosyltransferase activities in vitro. Also active in vitro on benzoates and benzoate derivatives. In Arabidopsis thaliana (Mouse-ear cress), this protein is Flavonol 3-O-glucosyltransferase UGT71C4.